The following is a 498-amino-acid chain: Probable dipeptidase B (498 aa).

The active site involves Cys-26.

Belongs to the peptidase C69 family.

It carries out the reaction an L-aminoacyl-L-amino acid + H2O = 2 an L-alpha-amino acid. The chain is Probable dipeptidase B (pepDB) from Streptococcus pyogenes serotype M1.